Consider the following 111-residue polypeptide: Universal stress protein B (111 aa).

Transmembrane regions (helical) follow at residues 1–21 and 90–110; these read MIST…NMAR and FILT…LMIW.

It belongs to the universal stress protein B family.

The protein resides in the cell inner membrane. The polypeptide is Universal stress protein B (Klebsiella pneumoniae (strain 342)).